The primary structure comprises 196 residues: Probable malonic semialdehyde reductase RutE (196 aa).

This sequence belongs to the nitroreductase family. HadB/RutE subfamily. FMN is required as a cofactor.

The enzyme catalyses 3-hydroxypropanoate + NADP(+) = 3-oxopropanoate + NADPH + H(+). May reduce toxic product malonic semialdehyde to 3-hydroxypropionic acid, which is excreted. The polypeptide is Probable malonic semialdehyde reductase RutE (Klebsiella pneumoniae (strain 342)).